We begin with the raw amino-acid sequence, 368 residues long: Histidinol-phosphate aminotransferase (368 aa).

K223 bears the N6-(pyridoxal phosphate)lysine mark.

This sequence belongs to the class-II pyridoxal-phosphate-dependent aminotransferase family. Histidinol-phosphate aminotransferase subfamily. As to quaternary structure, homodimer. Requires pyridoxal 5'-phosphate as cofactor.

It catalyses the reaction L-histidinol phosphate + 2-oxoglutarate = 3-(imidazol-4-yl)-2-oxopropyl phosphate + L-glutamate. It functions in the pathway amino-acid biosynthesis; L-histidine biosynthesis; L-histidine from 5-phospho-alpha-D-ribose 1-diphosphate: step 7/9. This is Histidinol-phosphate aminotransferase (hisC) from Sinorhizobium fredii (strain NBRC 101917 / NGR234).